The sequence spans 200 residues: Molybdenum cofactor guanylyltransferase (200 aa).

GTP is bound by residues 10 to 12, Lys-23, Asn-51, Asp-69, and Asp-99; that span reads LAG. A Mg(2+)-binding site is contributed by Asp-99.

It belongs to the MobA family. As to quaternary structure, monomer. It depends on Mg(2+) as a cofactor.

It is found in the cytoplasm. The enzyme catalyses Mo-molybdopterin + GTP + H(+) = Mo-molybdopterin guanine dinucleotide + diphosphate. In terms of biological role, transfers a GMP moiety from GTP to Mo-molybdopterin (Mo-MPT) cofactor (Moco or molybdenum cofactor) to form Mo-molybdopterin guanine dinucleotide (Mo-MGD) cofactor. This chain is Molybdenum cofactor guanylyltransferase, found in Shewanella pealeana (strain ATCC 700345 / ANG-SQ1).